The following is a 231-amino-acid chain: GSK-3-binding protein FRAT2 (231 aa).

Disordered regions lie at residues 1-24 (MPCR…DDSF) and 53-109 (DTAH…PGAV). Residues 7 to 23 (EEEEAGDEAEGEEDDDS) are compositionally biased toward acidic residues. An involved in GSK-3 binding region spans residues 172–194 (DPHRLLQQLVLSGNLIKEAVRRL). The segment at 203 to 231 (ATSPASAPGSGGGRSGPDSVTLQPSGAWL) is disordered.

This sequence belongs to the GSK-3-binding protein family. Binds GSK-3 and prevents GSK-3-dependent phosphorylation.

Its function is as follows. Positively regulates the Wnt signaling pathway by stabilizing beta-catenin through the association with GSK-3. The protein is GSK-3-binding protein FRAT2 (Frat2) of Mus musculus (Mouse).